A 323-amino-acid chain; its full sequence is MPALPMNQEFDRERFRVDLRATAAAIGAPVTPRVTDTVLETFRDNFAQGATLWKTTSQPGDQLSYRFFSRLKMDTVGRAVDAGLLDGTHPTVPIVEDWSDLYGGTPVQSADFDAGRGMAKTWLYFGGLRPAEDILSVPALPAPVQARLKDFLGLGLAHVRFAAVDWRHRSANVYFRGQGPLDTAQFARVHALSGGTPPAADVVAEVLAYVPEDYCVAITLDLHTGAIDRVCFYALKVPKDARPRVPARIATFLEVAPSHDPEECNVIGWSFGRSGDYVKAERSYTGNMTEILSGWNCFFHGEEGRDHDLRALQDTGSITGGAR.

R160 and E281 together coordinate substrate.

This sequence belongs to the aromatic prenyltransferase family. In terms of assembly, monomer.

It localises to the cytoplasm. The catalysed reaction is 3-(4-hydroxyphenyl)pyruvate + dimethylallyl diphosphate = 3-dimethylallyl-4-hydroxyphenylpyruvate + diphosphate. The protein operates within antibiotic biosynthesis; novobiocin biosynthesis. In terms of biological role, magnesium-independent aromatic prenyltransferase that catalyzes the irreversible transfer of a dimethylallyl group to 4-hydroxyphenylpyruvate to produce the ring A structure in the novobiocin biosynthesis pathway. Novobiocin is an aminocoumarin family antibiotic that targets bacterial DNA gyrases. It is able to prenylate many different compounds, including the phenylpropanoids 4-coumarate and caffeate, the plant polyketide resveratrol, the (iso)flavonoid naringenin, apigenin, daidzein and genistein, and the dihydroxynaphthalenes 1,6-DHN and 2,7-DHN. The protein is 4-hydroxyphenylpyruvate 3-dimethylallyltransferase of Streptomyces niveus (Streptomyces spheroides).